The chain runs to 457 residues: MRTEWVAKRRGQVNVSQMHYARQGVITEEMHYVAQRENLPTDLIRDEVARGRMIIPANINHTNLEPMAIGIASKCKVNANIGASPNSSNLQEEVDKLNLAVKYGADTVMDLSTGGGNLDEIRTAIIKASPVPIGTVPVYQALESVHGTIENLTADDFLHIIEKHAQQGVDYQTIHAGILIEHLPLVRNRITGIVSRGGGILARWMLHHHKQNPLYTHFQDIIEIFKRYDVSFSLGDSLRPGCTHDASDEAQLAELKTLGQLTRKAWEDDVQVMVEGPGHVPMDQIEFNVRKQMEECSEAPFYVLGPLVTDIAPGYDHITSAIGAAMAGWYGTAMLCYVTPKEHLGLPNAEDVRNGLIAYKIAAHAADIARHRPGARDRDDELSKARYNFDWNRQFELSLDPERAKEYHDETLPADIYKTAEFCSMCGPKFCPMQTKVDADALTELEKFLAKEPVTQS.

Substrate contacts are provided by residues Asn80, Met109, Tyr139, His175, 195–197, 236–239, and Glu275; these read SRG and DSLR. His279 contacts Zn(2+). Tyr302 contacts substrate. Zn(2+) is bound at residue His343. 3 residues coordinate [4Fe-4S] cluster: Cys423, Cys426, and Cys431.

It belongs to the ThiC family. [4Fe-4S] cluster is required as a cofactor.

It carries out the reaction 5-amino-1-(5-phospho-beta-D-ribosyl)imidazole + S-adenosyl-L-methionine = 4-amino-2-methyl-5-(phosphooxymethyl)pyrimidine + CO + 5'-deoxyadenosine + formate + L-methionine + 3 H(+). It participates in cofactor biosynthesis; thiamine diphosphate biosynthesis. Catalyzes the synthesis of the hydroxymethylpyrimidine phosphate (HMP-P) moiety of thiamine from aminoimidazole ribotide (AIR) in a radical S-adenosyl-L-methionine (SAM)-dependent reaction. This is Phosphomethylpyrimidine synthase from Nostoc punctiforme (strain ATCC 29133 / PCC 73102).